Here is a 641-residue protein sequence, read N- to C-terminus: Raffinose carrier protein (641 aa).

The permease stretch occupies residues 1–506; the sequence is MQEEHNYKWV…GQVIPLAQVN (506 aa). Helical transmembrane passes span 25–45, 57–77, 93–113, 120–140, 168–188, 201–221, 253–273, 288–308, 317–337, 342–362, 394–414, and 429–449; these read AFYSILSGYLIIFITSHLFDT, LVTLIIMVLRIVELFIDPFIG, WVVVGGTVSSIILLLLFTNLG, AMIYLVVFAILYITMDIFYSF, LGSTIGGGLVGVLVMPAVIFF, WFIFALIICLIALISAWGVGL, LLWAALAYLFYGVGINILGSL, FSILSIINIFLGLIATSLFPV, GVFAGCLVFMLGGIAIFTIAG, LVLLAATMFGFPQQMVFLVVL, FGGAISNGVVGQIAIISGMTT, and FKLTMFAFPALMLLIAIGIFS. A PTS EIIA type-1 domain is found at 507 to 611; that stretch reads DPTFAAGTLG…DDTVIMTVTN (105 aa). A Phosphohistidine; by HPr modification is found at histidine 559.

In the N-terminal section; belongs to the sodium:galactoside symporter (TC 2.A.2) family.

The protein localises to the cell membrane. In Pediococcus pentosaceus, this protein is Raffinose carrier protein (rafP).